We begin with the raw amino-acid sequence, 373 residues long: WAT1-related protein At4g08300 (373 aa).

The next 10 membrane-spanning stretches (helical) occupy residues 11-31 (PIIA…ITMV), 41-61 (ILAT…ALIL), 67-87 (PKMT…EPLL), 102-122 (TYSS…AVIF), 139-159 (IGTA…GPAI), 185-205 (WVTG…FFIL), 219-239 (LVMW…LIMV), 255-275 (AAVY…SIVI), 281-301 (VFTT…GVLV), and 306-326 (IHLG…SVVW). EamA domains follow at residues 23–151 (AGMY…AMVM) and 198–325 (TWAG…YSVV).

It belongs to the drug/metabolite transporter (DMT) superfamily. Plant drug/metabolite exporter (P-DME) (TC 2.A.7.4) family.

The protein resides in the membrane. The chain is WAT1-related protein At4g08300 from Arabidopsis thaliana (Mouse-ear cress).